A 416-amino-acid polypeptide reads, in one-letter code: NADH-quinone oxidoreductase subunit H (416 aa).

9 helical membrane passes run 16-36 (LILA…LAAI), 84-104 (PVYL…FAVI), 124-144 (LAVA…GIVL), 165-185 (VVSY…YAGT), 197-217 (STWY…SMVG), 260-280 (VSAL…PISL), 288-308 (WWPL…YIWL), 320-340 (FMAI…MIVA), and 353-373 (WASG…VVLW).

This sequence belongs to the complex I subunit 1 family. As to quaternary structure, NDH-1 is composed of 14 different subunits. Subunits NuoA, H, J, K, L, M, N constitute the membrane sector of the complex.

The protein localises to the cell membrane. It carries out the reaction a quinone + NADH + 5 H(+)(in) = a quinol + NAD(+) + 4 H(+)(out). In terms of biological role, NDH-1 shuttles electrons from NADH, via FMN and iron-sulfur (Fe-S) centers, to quinones in the respiratory chain. The immediate electron acceptor for the enzyme in this species is believed to be menaquinone. Couples the redox reaction to proton translocation (for every two electrons transferred, four hydrogen ions are translocated across the cytoplasmic membrane), and thus conserves the redox energy in a proton gradient. This subunit may bind ubiquinone. This Mycobacterium sp. (strain JLS) protein is NADH-quinone oxidoreductase subunit H.